Reading from the N-terminus, the 296-residue chain is 4-hydroxy-tetrahydrodipicolinate synthase (296 aa).

Threonine 49 is a pyruvate binding site. Catalysis depends on tyrosine 137, which acts as the Proton donor/acceptor. The Schiff-base intermediate with substrate role is filled by lysine 166. Isoleucine 208 is a binding site for pyruvate.

It belongs to the DapA family. As to quaternary structure, homotetramer; dimer of dimers.

The protein localises to the cytoplasm. It carries out the reaction L-aspartate 4-semialdehyde + pyruvate = (2S,4S)-4-hydroxy-2,3,4,5-tetrahydrodipicolinate + H2O + H(+). It functions in the pathway amino-acid biosynthesis; L-lysine biosynthesis via DAP pathway; (S)-tetrahydrodipicolinate from L-aspartate: step 3/4. Catalyzes the condensation of (S)-aspartate-beta-semialdehyde [(S)-ASA] and pyruvate to 4-hydroxy-tetrahydrodipicolinate (HTPA). This Chlorobium limicola (strain DSM 245 / NBRC 103803 / 6330) protein is 4-hydroxy-tetrahydrodipicolinate synthase.